A 513-amino-acid polypeptide reads, in one-letter code: Lysine--tRNA ligase (513 aa).

Over residues 1 to 11 the composition is skewed to polar residues; that stretch reads MTEPTQPNAAQ. Residues 1 to 22 form a disordered region; it reads MTEPTQPNAAQPNVVPEVDDNK. Positions 423 and 430 each coordinate Mg(2+).

Belongs to the class-II aminoacyl-tRNA synthetase family. Homodimer. Mg(2+) is required as a cofactor.

The protein resides in the cytoplasm. The enzyme catalyses tRNA(Lys) + L-lysine + ATP = L-lysyl-tRNA(Lys) + AMP + diphosphate. This chain is Lysine--tRNA ligase, found in Paraburkholderia xenovorans (strain LB400).